We begin with the raw amino-acid sequence, 600 residues long: MATEHIENKLKLLPDKPGCYLMKDINGNVIYVGKSKNLKNRVRSYFKSKQVGRRAELVREIRDFDIITVSSDKESFLLEITLIKKYQPYYNVQLKQGTGYPYIEITNERDPQTRLTSFVHKDHGYYFGPYPNVYAAQATLKFIQKVWPLRRCSGHQGRPCLYYHMGQCLGACFKEVPKSAYDKQIRKIKRFLNGDISQVKQDLTEKMTQASMNLEFERAAEFRDQLKYIEQTVEKQKIISNDHTQRDIFNFYVDKSWISIQVFFLRQAKLLRRETRLFPLTDTNEPQDAFVSFIAQFYGQRNRVLPKEVLVPAGIDNEALAEVLGVAVRTPQRGQKRALLEMAHDNAKLKLDEKFRLLELGNRKTKGAQKEIFDALGLPYGHRIESFDHSHIQGADPVSALVVFTDGEPDKHEYRKYKLKGEVEHQNAADEVGNTREVVRRRYSRLLKEHKKMPDLILMDGGQIQVDACLDVLRNELNVNIPVAGMVKDDHHRTNHLIFGDPTQGEELKLIPLNPKSEGFYLMTRIQDEVHRFAITFHRRTHAKNALSSKLDEIKGIGPKSRNKLLRKFGSLKKIKEASIEELRDAGLTLPQAQTVKLSL.

Residues 15-92 form the GIY-YIG domain; that stretch reads DKPGCYLMKD…IKKYQPYYNV (78 aa). The 36-residue stretch at 197–232 folds into the UVR domain; sequence SQVKQDLTEKMTQASMNLEFERAAEFRDQLKYIEQT.

This sequence belongs to the UvrC family. As to quaternary structure, interacts with UvrB in an incision complex.

The protein resides in the cytoplasm. In terms of biological role, the UvrABC repair system catalyzes the recognition and processing of DNA lesions. UvrC both incises the 5' and 3' sides of the lesion. The N-terminal half is responsible for the 3' incision and the C-terminal half is responsible for the 5' incision. The chain is UvrABC system protein C from Lactobacillus gasseri (strain ATCC 33323 / DSM 20243 / BCRC 14619 / CIP 102991 / JCM 1131 / KCTC 3163 / NCIMB 11718 / NCTC 13722 / AM63).